The following is a 402-amino-acid chain: Adenylyltransferase and sulfurtransferase MOCS3 (402 aa).

ATP contacts are provided by residues Gly-47, Asp-68, Asp-75–Arg-79, Lys-92, and Asp-136–Asn-137. Residues Cys-178 and Cys-181 each contribute to the Zn(2+) site. The Glycyl thioester intermediate; for adenylyltransferase activity role is filled by Cys-195. 2 residues coordinate Zn(2+): Cys-253 and Cys-256. Positions Ala-303–Pro-400 constitute a Rhodanese domain. Cys-359 functions as the Cysteine persulfide intermediate; for sulfurtransferase activity in the catalytic mechanism.

In the N-terminal section; belongs to the HesA/MoeB/ThiF family. UBA4 subfamily. Zn(2+) is required as a cofactor.

Its subcellular location is the cytoplasm. It localises to the cytosol. It catalyses the reaction [molybdopterin-synthase sulfur-carrier protein]-C-terminal Gly-Gly + ATP + H(+) = [molybdopterin-synthase sulfur-carrier protein]-C-terminal Gly-Gly-AMP + diphosphate. The catalysed reaction is [molybdopterin-synthase sulfur-carrier protein]-C-terminal Gly-Gly-AMP + S-sulfanyl-L-cysteinyl-[cysteine desulfurase] + AH2 = [molybdopterin-synthase sulfur-carrier protein]-C-terminal-Gly-aminoethanethioate + L-cysteinyl-[cysteine desulfurase] + A + AMP + 2 H(+). It functions in the pathway tRNA modification; 5-methoxycarbonylmethyl-2-thiouridine-tRNA biosynthesis. The protein operates within cofactor biosynthesis; molybdopterin biosynthesis. Its function is as follows. Plays a central role in 2-thiolation of mcm(5)S(2)U at tRNA wobble positions of cytosolic tRNA(Lys), tRNA(Glu) and tRNA(Gln). Also essential during biosynthesis of the molybdenum cofactor. Acts by mediating the C-terminal thiocarboxylation of sulfur carriers URM1 and MOCS2A. Its N-terminus first activates URM1 and MOCS2A as acyl-adenylates (-COAMP), then the persulfide sulfur on the catalytic cysteine is transferred to URM1 and MOCS2A to form thiocarboxylation (-COSH) of their C-terminus. The reaction probably involves hydrogen sulfide that is generated from the persulfide intermediate and that acts as a nucleophile towards URM1 and MOCS2A. Subsequently, a transient disulfide bond is formed. Does not use thiosulfate as sulfur donor; NFS1 probably acting as a sulfur donor for thiocarboxylation reactions. This Caenorhabditis briggsae protein is Adenylyltransferase and sulfurtransferase MOCS3.